Reading from the N-terminus, the 384-residue chain is Sensor protein VanS (384 aa).

Helical transmembrane passes span 21 to 41 (MYIVAIVVVAIVFVLYIRSMI) and 76 to 96 (IDIFIYVAIVISILILCRVML). A Histidine kinase domain is found at 161 to 376 (YLAHDIKTPL…TFRVELPAMP (216 aa)). H164 is modified (phosphohistidine; by autocatalysis). Residues 221–384 (QTITLTKTHI…MPDLVDKRRS (164 aa)) are involved in low-affinity ATP-binding. Exhibits higher affinity for ATP than GTP.

Autophosphorylated.

The protein resides in the membrane. The enzyme catalyses ATP + protein L-histidine = ADP + protein N-phospho-L-histidine.. Its activity is regulated as follows. Phosphorylation of VanR inhibited by EDTA. Its function is as follows. Member of the two-component regulatory system VanS/VanR. Functions as a sensor protein kinase which is autophosphorylated at a histidine residue in response to environmental stimuli, such as glycopeptide antibiotics. VanS transfers its phosphate group to transcriptional regulatory protein VanR, thereby modulating expression of target genes. Binds directly to, and autophosphorylation activity is enhanced by, the glycopeptides vancomycin and teicoplanin, in vitro. However it has also been reported that autophosphorylation, phosphate transfer to VanR and dephosphorylation of phospho-VanR are all unaffected by the presence of vancomycin, in vitro. In the absence of vancomycin, negatively regulates VanR-mediated activation of vanS, vanH, vanA and vanX, probably as a result of dephosphorylating phospho-VanR. May inhibit promoter-specific DNA binding by VanR. Involved in conferring vancomycin resistance. This Enterococcus faecium (Streptococcus faecium) protein is Sensor protein VanS.